Reading from the N-terminus, the 1057-residue chain is Carbamoyl phosphate synthase large chain (1057 aa).

Residues Met1–Glu401 are carboxyphosphate synthetic domain. ATP contacts are provided by Arg129, Arg169, Gly175, Gly176, Lys208, Ile210, Glu215, Gly241, Ile242, His243, Gln284, and Glu298. The region spanning Arg133 to Ile327 is the ATP-grasp 1 domain. The Mg(2+) site is built by Gln284, Glu298, and Asn300. Positions 284, 298, and 300 each coordinate Mn(2+). The interval Tyr402–Ser546 is oligomerization domain. Residues Val547–Gly929 form a carbamoyl phosphate synthetic domain region. Residues Glu671 to Ile861 form the ATP-grasp 2 domain. Residues Arg707, Arg746, Leu748, Glu752, Gly777, Val778, His779, Ser780, Gln820, and Glu832 each contribute to the ATP site. Mg(2+)-binding residues include Gln820, Glu832, and Asn834. Residues Gln820, Glu832, and Asn834 each coordinate Mn(2+). An MGS-like domain is found at Met930 to Met1057. Positions Met930 to Met1057 are allosteric domain.

The protein belongs to the CarB family. As to quaternary structure, composed of two chains; the small (or glutamine) chain promotes the hydrolysis of glutamine to ammonia, which is used by the large (or ammonia) chain to synthesize carbamoyl phosphate. Tetramer of heterodimers (alpha,beta)4. Mg(2+) is required as a cofactor. The cofactor is Mn(2+).

It catalyses the reaction hydrogencarbonate + L-glutamine + 2 ATP + H2O = carbamoyl phosphate + L-glutamate + 2 ADP + phosphate + 2 H(+). It carries out the reaction hydrogencarbonate + NH4(+) + 2 ATP = carbamoyl phosphate + 2 ADP + phosphate + 2 H(+). Its pathway is amino-acid biosynthesis; L-arginine biosynthesis; carbamoyl phosphate from bicarbonate: step 1/1. It participates in pyrimidine metabolism; UMP biosynthesis via de novo pathway; (S)-dihydroorotate from bicarbonate: step 1/3. Functionally, large subunit of the glutamine-dependent carbamoyl phosphate synthetase (CPSase). CPSase catalyzes the formation of carbamoyl phosphate from the ammonia moiety of glutamine, carbonate, and phosphate donated by ATP, constituting the first step of 2 biosynthetic pathways, one leading to arginine and/or urea and the other to pyrimidine nucleotides. The large subunit (synthetase) binds the substrates ammonia (free or transferred from glutamine from the small subunit), hydrogencarbonate and ATP and carries out an ATP-coupled ligase reaction, activating hydrogencarbonate by forming carboxy phosphate which reacts with ammonia to form carbamoyl phosphate. In Staphylococcus saprophyticus subsp. saprophyticus (strain ATCC 15305 / DSM 20229 / NCIMB 8711 / NCTC 7292 / S-41), this protein is Carbamoyl phosphate synthase large chain.